A 330-amino-acid polypeptide reads, in one-letter code: Solute carrier family 25 member 16 (330 aa).

Solcar repeat units follow at residues 32-118 (FYWL…YKTL), 126-214 (SGHV…LKSV), and 236-326 (LKTH…MKQF). 6 consecutive transmembrane segments (helical) span residues 33-52 (YWLR…KTTV), 95-112 (GAMM…FMAF), 132-149 (LMAG…TYPL), 189-209 (GLMP…FTFG), 242-262 (LLCG…FDVT), and 297-317 (GLYR…AVAF).

The protein belongs to the mitochondrial carrier (TC 2.A.29) family. As to expression, mostly in thyroid, liver, lung, kidney and to a lesser extent in heart and skeletal muscle.

It is found in the mitochondrion inner membrane. In terms of biological role, may be involved in the transport of coenzyme A in the mitochondrial matrix. Very little is known about the physiological function of this carrier. The chain is Solute carrier family 25 member 16 (SLC25A16) from Bos taurus (Bovine).